The primary structure comprises 125 residues: MAITKEDILNAVAEMSVMDVCDLVKMMEDKFGVSAAAAVAVAAGPVAGPAEAAEEKTEFDVVLVDAGSNKIAAIKAVRGATGLGLKEAKDAVEGTPFTVKEAASKEEAEALKKQLEEAGAKVELK.

This sequence belongs to the bacterial ribosomal protein bL12 family. In terms of assembly, homodimer. Part of the ribosomal stalk of the 50S ribosomal subunit. Forms a multimeric L10(L12)X complex, where L10 forms an elongated spine to which 2 to 4 L12 dimers bind in a sequential fashion. Binds GTP-bound translation factors.

Its function is as follows. Forms part of the ribosomal stalk which helps the ribosome interact with GTP-bound translation factors. Is thus essential for accurate translation. This Francisella tularensis subsp. novicida (strain U112) protein is Large ribosomal subunit protein bL12.